Consider the following 295-residue polypeptide: Cytidine deaminase (295 aa).

CMP/dCMP-type deaminase domains are found at residues 48–168 (TDSE…FGPA) and 187–295 (KETD…YVAA). 89–91 (NME) provides a ligand contact to substrate. H102 contributes to the Zn(2+) binding site. The active-site Proton donor is E104. 2 residues coordinate Zn(2+): C129 and C132.

This sequence belongs to the cytidine and deoxycytidylate deaminase family. Homodimer. Requires Zn(2+) as cofactor.

It catalyses the reaction cytidine + H2O + H(+) = uridine + NH4(+). It carries out the reaction 2'-deoxycytidine + H2O + H(+) = 2'-deoxyuridine + NH4(+). This enzyme scavenges exogenous and endogenous cytidine and 2'-deoxycytidine for UMP synthesis. The sequence is that of Cytidine deaminase from Photobacterium profundum (strain SS9).